The following is a 231-amino-acid chain: Probable cell wall protein ARB_06477 (231 aa).

An N-terminal signal peptide occupies residues methionine 1–alanine 17. Residues threonine 107 to proline 206 form a disordered region. Low complexity predominate over residues threonine 121 to glycine 204. Serine 203 carries GPI-anchor amidated serine lipidation. The propeptide at glycine 204–leucine 231 is removed in mature form.

Belongs to the SRP1/TIP1 family. In terms of processing, the GPI-anchor is attached to the protein in the endoplasmic reticulum and serves to target the protein to the cell surface. There, the glucosamine-inositol phospholipid moiety is cleaved off and the GPI-modified mannoprotein is covalently attached via its lipidless GPI glycan remnant to the 1,6-beta-glucan of the outer cell wall layer.

It localises to the cell membrane. It is found in the secreted. The protein localises to the cell wall. In terms of biological role, probable component of the cell wall. This Arthroderma benhamiae (strain ATCC MYA-4681 / CBS 112371) (Trichophyton mentagrophytes) protein is Probable cell wall protein ARB_06477.